The following is a 128-amino-acid chain: MRSSRCARLLLLLLLPPLLLTPPAGDAAVITGACDRDPQCGGGMCCAVSLWVKSIRICTPMGKVGDSCHPMTRKNHFGNGRQERRKRKRRRKKKVPFLGRRMHHTCPCLPGLACSRTSFNRYTCLAQK.

A signal peptide spans 1 to 27; sequence MRSSRCARLLLLLLLPPLLLTPPAGDA. Intrachain disulfides connect Cys-34–Cys-46, Cys-40–Cys-58, Cys-45–Cys-106, Cys-68–Cys-114, and Cys-108–Cys-124. The interval 71–95 is disordered; sequence MTRKNHFGNGRQERRKRKRRRKKKV. The segment covering 83–95 has biased composition (basic residues); the sequence is ERRKRKRRRKKKV.

This sequence belongs to the AVIT (prokineticin) family.

The protein localises to the secreted. In terms of biological role, may function as an output molecule from the suprachiasmatic nucleus (SCN) that transmits behavioral circadian rhythm. May also function locally within the SCN to synchronize output. Potently contracts gastrointestinal (GI) smooth muscle. In Bos taurus (Bovine), this protein is Prokineticin-2 (PROK2).